Here is a 509-residue protein sequence, read N- to C-terminus: Probable cytochrome P450 4ac3 (509 aa).

Residue C454 coordinates heme.

The protein belongs to the cytochrome P450 family. The cofactor is heme.

It is found in the endoplasmic reticulum membrane. The protein localises to the microsome membrane. Functionally, may be involved in the metabolism of insect hormones and in the breakdown of synthetic insecticides. The sequence is that of Probable cytochrome P450 4ac3 (Cyp4ac3) from Drosophila melanogaster (Fruit fly).